Reading from the N-terminus, the 686-residue chain is Alpha-amylase 1 (686 aa).

The Nucleophile role is filled by Glu125. The active-site Proton donor is Asp216.

The protein belongs to the glycosyl hydrolase 57 family.

It localises to the cytoplasm. It carries out the reaction Endohydrolysis of (1-&gt;4)-alpha-D-glucosidic linkages in polysaccharides containing three or more (1-&gt;4)-alpha-linked D-glucose units.. In terms of biological role, this amylase is a highly liquefying-type: oligomers appeared at the beginning of incubation, followed by a graded decrease in the amounts of maltotriose, maltose and glucose in prolonged incubation. This chain is Alpha-amylase 1 (amyA), found in Dictyoglomus thermophilum (strain ATCC 35947 / DSM 3960 / H-6-12).